We begin with the raw amino-acid sequence, 446 residues long: MNVADIAMDLFRGAKGETISIFAIAKVTVTGVSRGLSKLVFGVVDQANLVNLGQYVVYSVVSMIYNITLHPLASFPGPVFWGASRWPSIWRLFKGRLVHDVHALHGQYGHVVRIAPNELAFSSAQAWKDIYGHKRGNNSMEEMPKFHKFYSGISKTPSIVSEPTRDGHRFIRRILSPAFSDKNLRELEPIVQGYISQFIDQLRSHCEDSTGSKVPLDLVSWYNSATFDIVGDLTFGRPFGSLEQGEEDPFIKDINHFAAVGGAMLIFTSHFPGRGILRFLASLGKVFQNGQEKHVTKMEESLVDRMKNKSSRPDIIDGLVKEKDGFQIDYDRVLENAAAITMAGSETTASQLSGLTALLLQNPNCLERLKKEVRSAFKSDKDITSTSSLVGVWQYSANHSPRNFTYPDEFRPDRWLDDRDQKEYEHDHGDAMQPFSVGPRDCPSQK.

Positions 403-446 (NFTYPDEFRPDRWLDDRDQKEYEHDHGDAMQPFSVGPRDCPSQK) are disordered. Over residues 408 to 430 (DEFRPDRWLDDRDQKEYEHDHGD) the composition is skewed to basic and acidic residues. Cysteine 442 contacts heme.

The protein belongs to the cytochrome P450 family. Heme is required as a cofactor.

The protein operates within mycotoxin biosynthesis. In terms of biological role, cytochrome P450 monooxygenase; part of the core atranone cluster (CAC) which products are predicted to catalyze most or all steps of mycotoxin atranone synthesis, starting from geranylgeranyl pyrophosphate (GGPP). The initial cyclization of GGPP to dolabellane is probably performed by the terpene cyclase ATR13. The Baeyer-Villiger oxidation near the end of the atranone synthesis, which converts atranones D and E to atranones F and G is predicted to be catalyzed by the monooxygenase ATR8. Of the CAC's other predicted gene products, the reducing PKS ATR6 might synthesize a polyketide chain. This polyketide is probably transferred onto the atranone backbone by the polyketide transferase ATR5. Other predicted CAC products include 4 oxygenases (ATR2, ATR3, ATR4, and ATR14), 3 short-chain reductases (ATR7, ATR9, and ATR10), and a methyltransferase (ATR12). These may all be involved in the various steps of atranone biosynthesis, although their specific roles must await experimental determination. The protein is Cytochrome P450 monooxygenase ATR14 of Stachybotrys chlorohalonatus (strain IBT 40285).